A 258-amino-acid chain; its full sequence is Flap endonuclease Xni (258 aa).

A Mg(2+)-binding site is contributed by D109. Residues 165-254 (VKPEQLPDYW…GFNLQDIRYL (90 aa)) form the 5'-3' exonuclease domain. K(+)-binding residues include L176, A177, P185, I187, and I190. Positions 189-194 (GIGPKA) are interaction with DNA.

It belongs to the Xni family. The cofactor is Mg(2+). It depends on K(+) as a cofactor.

Has flap endonuclease activity. During DNA replication, flap endonucleases cleave the 5'-overhanging flap structure that is generated by displacement synthesis when DNA polymerase encounters the 5'-end of a downstream Okazaki fragment. The sequence is that of Flap endonuclease Xni from Photobacterium profundum (strain SS9).